The primary structure comprises 149 residues: Transcriptional repressor NrdR (149 aa).

A zinc finger spans residues 3–34 (CPFCFAVDTKVIDSRLVGEGSSVRRRRQCLVC). The 91-residue stretch at 49-139 (PRVVKSNDVR…VYRSFEDIKE (91 aa)) folds into the ATP-cone domain.

Belongs to the NrdR family. Zn(2+) is required as a cofactor.

Functionally, negatively regulates transcription of bacterial ribonucleotide reductase nrd genes and operons by binding to NrdR-boxes. In Shigella flexneri, this protein is Transcriptional repressor NrdR.